A 68-amino-acid chain; its full sequence is P21 prophage-derived head-stabilizing protein (68 aa).

This sequence belongs to the lambda phage gpW family.

This chain is P21 prophage-derived head-stabilizing protein, found in Escherichia coli O6:H1 (strain CFT073 / ATCC 700928 / UPEC).